The sequence spans 266 residues: Phosphatidylglycerol--prolipoprotein diacylglyceryl transferase (266 aa).

7 consecutive transmembrane segments (helical) span residues 10-30, 56-76, 92-112, 120-140, 171-191, 199-219, and 233-253; these read VALA…LIGI, LVFW…VLFY, WKGG…VWWF, FFQL…AGRI, PSQL…LWLF, ASVS…VEFV, and WLTM…ALMV. Residue Arg-139 participates in a 1,2-diacyl-sn-glycero-3-phospho-(1'-sn-glycerol) binding.

This sequence belongs to the Lgt family.

Its subcellular location is the cell inner membrane. The catalysed reaction is L-cysteinyl-[prolipoprotein] + a 1,2-diacyl-sn-glycero-3-phospho-(1'-sn-glycerol) = an S-1,2-diacyl-sn-glyceryl-L-cysteinyl-[prolipoprotein] + sn-glycerol 1-phosphate + H(+). The protein operates within protein modification; lipoprotein biosynthesis (diacylglyceryl transfer). In terms of biological role, catalyzes the transfer of the diacylglyceryl group from phosphatidylglycerol to the sulfhydryl group of the N-terminal cysteine of a prolipoprotein, the first step in the formation of mature lipoproteins. This chain is Phosphatidylglycerol--prolipoprotein diacylglyceryl transferase, found in Pseudomonas paraeruginosa (strain DSM 24068 / PA7) (Pseudomonas aeruginosa (strain PA7)).